The primary structure comprises 47 residues: Photosystem II reaction center protein Psb30 (47 aa).

Residues 19-39 (VIFQLLSVALIVIAGPVVIFL) form a helical membrane-spanning segment.

Belongs to the Psb30/Ycf12 family. As to quaternary structure, PSII is composed of 1 copy each of membrane proteins PsbA, PsbB, PsbC, PsbD, PsbE, PsbF, PsbH, PsbI, PsbJ, PsbK, PsbL, PsbM, PsbT, PsbX, PsbY, PsbZ, Psb30/Ycf12, peripheral proteins PsbO, CyanoQ (PsbQ), PsbU, PsbV and a large number of cofactors. It forms dimeric complexes.

The protein resides in the cellular thylakoid membrane. Functionally, a core subunit of photosystem II (PSII), probably helps stabilize the reaction center. The polypeptide is Photosystem II reaction center protein Psb30 (Nostoc punctiforme (strain ATCC 29133 / PCC 73102)).